The sequence spans 393 residues: Cytotoxic and regulatory T-cell molecule (393 aa).

The first 17 residues, 1-17 (MWWRVLSLLAWFPLQEA), serve as a signal peptide directing secretion. An Ig-like V-type domain is found at 18–114 (SLTNHTETIT…VSTKEVKVIV (97 aa)). At 18–287 (SLTNHTETIT…YLGLARKKSG (270 aa)) the chain is on the extracellular side. 3 N-linked (GlcNAc...) asparagine glycosylation sites follow: N21, N87, and N178. Disulfide bonds link C38/C98 and C141/C196. One can recognise an Ig-like C2-type domain in the interval 118 to 210 (PFKPILEASV…RGLQGRKLVA (93 aa)). Residues 225 to 273 (SDALERNSLSSQDPQQPTSTVSVTEDSSTSEIDKEEKEQTTQDPDLTTE) form a disordered region. Polar residues predominate over residues 231 to 241 (NSLSSQDPQQP). The span at 242-254 (TSTVSVTEDSSTS) shows a compositional bias: low complexity. A compositionally biased stretch (basic and acidic residues) spans 255 to 264 (EIDKEEKEQT). The helical transmembrane segment at 288–308 (ILLLTLVSFLIFILFIIVQLF) threads the bilayer. Residues 309-393 (IMKLRKAHVI…KHIQVPESIV (85 aa)) are Cytoplasmic-facing. Basic and acidic residues-rich tracts occupy residues 328-348 (HTLESYRSRSNNEETSSEEKN) and 374-387 (ENVQHSKLEEKHIQ). Disordered regions lie at residues 328–354 (HTLESYRSRSNNEETSSEEKNGQSSHP) and 374–393 (ENVQHSKLEEKHIQVPESIV). A PDZ-binding motif is present at residues 390–393 (ESIV).

The protein belongs to the nectin family. Monomer. May form homodimer (via Ig-like V-type domain). Interacts (via Ig-like V-type domain) with CADM1 (via Ig-like V-type domain); the interaction competes with CRTAM homodimerization and CADM1 homodimerization. Interacts (via PDZ-binding motif) with SCRIB (via PDZ domain 3); the interaction promotes CRTAM and SCRIB polarization in a subset of CD4+ T-cells. In the immune system, expression is restricted to activated class-I MHC-restricted cells, including NKT and CD8 T-cells. Strongly expressed in spleen, thymus, small intestine, peripheral blood leukocyte, and in Purkinje neurons in cerebellum. Expressed at much lower levels in testis, ovary, colon, lung and lymphoid tissues.

Its subcellular location is the cell membrane. In terms of biological role, mediates heterophilic cell-cell adhesion which regulates the activation, differentiation and tissue retention of various T-cell subsets. Interaction with CADM1 promotes natural killer (NK) cell cytotoxicity and IFNG/interferon-gamma secretion by CD8+ T-cells in vitro as well as NK cell-mediated rejection of tumors expressing CADM1 in vivo. Regulates CD8+ T-cell proliferation in response to T-cell receptor (TCR) activation. Appears to be dispensable for CD8+ T-cell-mediated cytotoxicity. Interaction with SCRIB promotes the late phase of cellular polarization of a subset of CD4+ T-cells, which in turn regulates TCR-mediated proliferation and IFNG, IL17 and IL22 production. By interacting with CADM1 on CD8+ dendritic cells, regulates the retention of activated CD8+ T-cells within the draining lymph node. Required for the intestinal retention of intraepithelial CD4+ CD8+ T-cells and, to a lesser extent, intraepithelial and lamina propria CD8+ T-cells and CD4+ T-cells. Interaction with CADM1 promotes the adhesion to gut-associated CD103+ dendritic cells, which may facilitate the expression of gut-homing and adhesion molecules on T-cells and the conversion of CD4+ T-cells into CD4+ CD8+ T-cells. The chain is Cytotoxic and regulatory T-cell molecule from Homo sapiens (Human).